The sequence spans 253 residues: Imidazole glycerol phosphate synthase subunit HisF (253 aa).

Active-site residues include D11 and D130.

Belongs to the HisA/HisF family. In terms of assembly, heterodimer of HisH and HisF.

It is found in the cytoplasm. It catalyses the reaction 5-[(5-phospho-1-deoxy-D-ribulos-1-ylimino)methylamino]-1-(5-phospho-beta-D-ribosyl)imidazole-4-carboxamide + L-glutamine = D-erythro-1-(imidazol-4-yl)glycerol 3-phosphate + 5-amino-1-(5-phospho-beta-D-ribosyl)imidazole-4-carboxamide + L-glutamate + H(+). It participates in amino-acid biosynthesis; L-histidine biosynthesis; L-histidine from 5-phospho-alpha-D-ribose 1-diphosphate: step 5/9. Functionally, IGPS catalyzes the conversion of PRFAR and glutamine to IGP, AICAR and glutamate. The HisF subunit catalyzes the cyclization activity that produces IGP and AICAR from PRFAR using the ammonia provided by the HisH subunit. The protein is Imidazole glycerol phosphate synthase subunit HisF of Myxococcus xanthus (strain DK1622).